A 143-amino-acid chain; its full sequence is Transcription antitermination protein NusB (143 aa).

The protein belongs to the NusB family.

In terms of biological role, involved in transcription antitermination. Required for transcription of ribosomal RNA (rRNA) genes. Binds specifically to the boxA antiterminator sequence of the ribosomal RNA (rrn) operons. The protein is Transcription antitermination protein NusB of Desulforamulus reducens (strain ATCC BAA-1160 / DSM 100696 / MI-1) (Desulfotomaculum reducens).